The primary structure comprises 346 residues: Formimidoylglutamase (346 aa).

Residues H145, D180, H182, D184, D271, and D273 each coordinate Mn(2+).

Belongs to the arginase family. Requires Mn(2+) as cofactor.

It carries out the reaction N-formimidoyl-L-glutamate + H2O = formamide + L-glutamate. It functions in the pathway amino-acid degradation; L-histidine degradation into L-glutamate; L-glutamate from N-formimidoyl-L-glutamate (hydrolase route): step 1/1. Functionally, catalyzes the conversion of N-formimidoyl-L-glutamate to L-glutamate and formamide. The sequence is that of Formimidoylglutamase from Psychrobacter cryohalolentis (strain ATCC BAA-1226 / DSM 17306 / VKM B-2378 / K5).